A 263-amino-acid chain; its full sequence is uncharacterized protein (263 aa).

Positions 1-22 are cleaved as a signal peptide; it reads MEYLKRLALLISVIILTIFIMG. Residue cysteine 23 is the site of N-palmitoyl cysteine attachment. Cysteine 23 is lipidated: S-diacylglycerol cysteine.

Belongs to the staphylococcal tandem lipoprotein family.

It is found in the cell membrane. This is an uncharacterized protein from Staphylococcus aureus (strain COL).